We begin with the raw amino-acid sequence, 192 residues long: Ribosomal RNA small subunit methyltransferase G (192 aa).

Residues G59, I111 to E112, and R124 contribute to the S-adenosyl-L-methionine site.

This sequence belongs to the methyltransferase superfamily. RNA methyltransferase RsmG family.

It localises to the cytoplasm. Functionally, specifically methylates the N7 position of a guanine in 16S rRNA. This Mycoplasma genitalium (strain ATCC 33530 / DSM 19775 / NCTC 10195 / G37) (Mycoplasmoides genitalium) protein is Ribosomal RNA small subunit methyltransferase G.